The following is a 602-amino-acid chain: Cholinesterase (602 aa).

The N-terminal stretch at 1–28 (MQSRSTVIYIRFVLWFLLLWVLFEKSHT) is a signal peptide. Residues asparagine 85 and asparagine 134 are each glycosylated (N-linked (GlcNAc...) asparagine). 144 to 145 (GS) lines the substrate pocket. The Acyl-ester intermediate role is filled by serine 226. Phosphoserine is present on serine 226. Asparagine 269 and asparagine 284 each carry an N-linked (GlcNAc...) asparagine glycan. Glutamate 353 acts as the Charge relay system in catalysis. The N-linked (GlcNAc...) asparagine glycan is linked to asparagine 369. Residue histidine 466 is the Charge relay system of the active site. 4 N-linked (GlcNAc...) asparagine glycosylation sites follow: asparagine 483, asparagine 509, asparagine 513, and asparagine 514.

This sequence belongs to the type-B carboxylesterase/lipase family. As to quaternary structure, homotetramer; disulfide-linked. Dimer of dimers. In terms of tissue distribution, present in most cells except erythrocytes.

It is found in the secreted. It catalyses the reaction an acylcholine + H2O = a carboxylate + choline + H(+). Esterase with broad substrate specificity. Contributes to the inactivation of the neurotransmitter acetylcholine. Can degrade neurotoxic organophosphate esters. This chain is Cholinesterase (BCHE), found in Bos taurus (Bovine).